The primary structure comprises 1358 residues: Probable serine/threonine-protein kinase ifkB (1358 aa).

A Protein kinase domain is found at 1 to 582 (MIGKGGFGVV…TKQLLESGLL (582 aa)). ATP is bound by residues 2–10 (IGKGGFGVV) and lysine 25. The disordered stretch occupies residues 125–359 (GANNTAGGGD…SSSRKKPPKE (235 aa)). Positions 136 to 148 (VSNANSNKSMIVG) are enriched in polar residues. Positions 149–196 (NNNKKLTLSSSNTSSSSSLLSNNKSKILNTSKSTSTNTSTSTSTSNTN) are enriched in low complexity. A compositionally biased stretch (basic residues) spans 197–208 (KNKKISKKKKSK). The span at 258-285 (NNNNDSNNNYHSDNESDSFSGSISMSDG) shows a compositional bias: low complexity. The span at 306 to 333 (DDNENDDDDEEDDDDEYDEEDDDYETFD) shows a compositional bias: acidic residues. The segment covering 342–351 (SNNSKLSTSS) has biased composition (low complexity). Aspartate 413 (proton acceptor) is an active-site residue. Disordered stretches follow at residues 445 to 470 (DDLNSSTSNAANNINLSSSTNSTAQQ) and 1148 to 1204 (GSGG…QQTS). Residues 447 to 466 (LNSSTSNAANNINLSSSTNS) show a composition bias toward low complexity. Residues 1148–1172 (GSGGSGGSGGGSSMSSGGGGGGNSN) are compositionally biased toward gly residues. The segment covering 1185–1199 (SNQSTSSSGNSNNSN) has biased composition (low complexity).

It belongs to the protein kinase superfamily. Ser/Thr protein kinase family. GCN2 subfamily.

It catalyses the reaction L-seryl-[protein] + ATP = O-phospho-L-seryl-[protein] + ADP + H(+). The catalysed reaction is L-threonyl-[protein] + ATP = O-phospho-L-threonyl-[protein] + ADP + H(+). The polypeptide is Probable serine/threonine-protein kinase ifkB (ifkB) (Dictyostelium discoideum (Social amoeba)).